Reading from the N-terminus, the 540-residue chain is Chaperonin GroEL 4 (540 aa).

Residues 29–32 (TLGP), 86–90 (DGTTT), glycine 413, 477–479 (NAA), and aspartate 493 contribute to the ATP site.

Belongs to the chaperonin (HSP60) family. In terms of assembly, forms a cylinder of 14 subunits composed of two heptameric rings stacked back-to-back. Interacts with the co-chaperonin GroES.

It localises to the cytoplasm. The catalysed reaction is ATP + H2O + a folded polypeptide = ADP + phosphate + an unfolded polypeptide.. In terms of biological role, together with its co-chaperonin GroES, plays an essential role in assisting protein folding. The GroEL-GroES system forms a nano-cage that allows encapsulation of the non-native substrate proteins and provides a physical environment optimized to promote and accelerate protein folding. This Frankia alni (strain DSM 45986 / CECT 9034 / ACN14a) protein is Chaperonin GroEL 4.